The chain runs to 148 residues: Ribonuclease H (148 aa).

The region spanning 1–142 (MSDSVELYTD…ADQLANRGVD (142 aa)) is the RNase H type-1 domain. Positions 10, 48, 70, and 134 each coordinate Mg(2+). Residues 129–148 (GNERADQLANRGVDEVRAKR) are disordered.

It belongs to the RNase H family. As to quaternary structure, monomer. Mg(2+) is required as a cofactor.

The protein resides in the cytoplasm. The catalysed reaction is Endonucleolytic cleavage to 5'-phosphomonoester.. Its function is as follows. Endonuclease that specifically degrades the RNA of RNA-DNA hybrids. The protein is Ribonuclease H of Pseudomonas putida (strain W619).